The chain runs to 550 residues: Cochlin (550 aa).

An N-terminal signal peptide occupies residues 1–24; the sequence is MSAAWIPALGLGVCLLLLPGPAGS. An LCCL domain is found at 28 to 121; sequence APIAITCFTR…QMLSRWSASF (94 aa). 2 disulfide bridges follow: C34-C50 and C54-C74. N100 carries N-linked (GlcNAc...) asparagine glycosylation. A compositionally biased stretch (polar residues) spans 128–139; that stretch reads SSTQEATGQAVS. Residues 128 to 159 are disordered; the sequence is SSTQEATGQAVSTAHPPTGKRLKKTPEKKTGN. VWFA domains follow at residues 165-346 and 367-537; these read DIAF…VKPL and NIAF…VSDV. The N-linked (GlcNAc...) asparagine glycan is linked to N221.

In terms of assembly, monomer. May form homodimer. Interacts with type II collagen. Interacts with SLC44A2. Interacts with ANXA2. Post-translationally, N-glycosylated. A 50 kDa form is created by proteolytic cleavage. As to expression, expressed in inner ear structures; the cochlea and the vestibule.

It is found in the secreted. It localises to the extracellular space. Its subcellular location is the extracellular matrix. Functionally, plays a role in the control of cell shape and motility in the trabecular meshwork. In Homo sapiens (Human), this protein is Cochlin (COCH).